The chain runs to 119 residues: uncharacterized protein (119 aa).

Residues 67–119 (LGLKEVQKKSNEGLNEVQGVADINKQKRPANSQDSSSVEGDIQNFLEKVTGKN) are disordered. Residues 95–104 (PANSQDSSSV) are compositionally biased toward polar residues.

This is an uncharacterized protein from Anabaena variabilis.